The chain runs to 412 residues: Dihydrolipoyllysine-residue acetyltransferase component of pyruvate dehydrogenase complex (412 aa).

Residues 2–78 form the Lipoyl-binding domain; that stretch reads PIKILMPVLS…PVNSLIAVLS (77 aa). Residue K43 is modified to N6-lipoyllysine. The Peripheral subunit-binding (PSBD) domain occupies 132-169; it reads FASPLAKRLAKMGNIRLESVKGSGPHGRIVKQDILSYT. Residue H385 is part of the active site.

The protein belongs to the 2-oxoacid dehydrogenase family. In terms of assembly, forms a 24-polypeptide structural core with octahedral symmetry. Requires (R)-lipoate as cofactor.

The enzyme catalyses N(6)-[(R)-dihydrolipoyl]-L-lysyl-[protein] + acetyl-CoA = N(6)-[(R)-S(8)-acetyldihydrolipoyl]-L-lysyl-[protein] + CoA. In terms of biological role, the pyruvate dehydrogenase complex catalyzes the overall conversion of pyruvate to acetyl-CoA and CO(2). It contains multiple copies of three enzymatic components: pyruvate dehydrogenase (E1), dihydrolipoamide acetyltransferase (E2) and lipoamide dehydrogenase (E3). In Rickettsia felis (strain ATCC VR-1525 / URRWXCal2) (Rickettsia azadi), this protein is Dihydrolipoyllysine-residue acetyltransferase component of pyruvate dehydrogenase complex (pdhC).